Reading from the N-terminus, the 211-residue chain is 3-demethoxyubiquinol 3-hydroxylase (211 aa).

Residues 22-43 (KHPLNPNRKSPSANTVDGQLSD) are disordered. Residues 28-42 (NRKSPSANTVDGQLS) are compositionally biased toward polar residues. The Fe cation site is built by glutamate 60, glutamate 90, histidine 93, glutamate 142, glutamate 174, and histidine 177.

It belongs to the COQ7 family. The cofactor is Fe cation.

The protein localises to the cell membrane. It carries out the reaction a 5-methoxy-2-methyl-3-(all-trans-polyprenyl)benzene-1,4-diol + AH2 + O2 = a 3-demethylubiquinol + A + H2O. It functions in the pathway cofactor biosynthesis; ubiquinone biosynthesis. Catalyzes the hydroxylation of 2-nonaprenyl-3-methyl-6-methoxy-1,4-benzoquinol during ubiquinone biosynthesis. The chain is 3-demethoxyubiquinol 3-hydroxylase from Francisella philomiragia subsp. philomiragia (strain ATCC 25017 / CCUG 19701 / FSC 153 / O#319-036).